Reading from the N-terminus, the 740-residue chain is Ion-translocating oxidoreductase complex subunit C (740 aa).

4Fe-4S ferredoxin-type domains follow at residues 369–397 and 407–436; these read GEPQEEQSCIRCSACADACPADLLPQQLY and KATTHNIADCIECGACAWVCPSNIPLVQYF. Cysteine 377, cysteine 380, cysteine 383, cysteine 387, cysteine 416, cysteine 419, cysteine 422, and cysteine 426 together coordinate [4Fe-4S] cluster. The interval 602–718 is disordered; the sequence is KLEQQQANAE…EEQVDPRKAA (117 aa).

Belongs to the 4Fe4S bacterial-type ferredoxin family. RnfC subfamily. The complex is composed of six subunits: RsxA, RsxB, RsxC, RsxD, RsxE and RsxG. The cofactor is [4Fe-4S] cluster.

It is found in the cell inner membrane. Functionally, part of a membrane-bound complex that couples electron transfer with translocation of ions across the membrane. Required to maintain the reduced state of SoxR. The protein is Ion-translocating oxidoreductase complex subunit C of Shigella sonnei (strain Ss046).